The chain runs to 371 residues: Polygalacturonase (371 aa).

The N-terminal stretch at 1–19 (MPSYLRNLVWATLAAGLVS) is a signal peptide. A propeptide spanning residues 20-34 (AAPTPSRVSDLTKKS) is cleaved from the precursor. A disulfide bond links Cys-38 and Cys-53. PbH1 repeat units lie at residues 95–117 (GPLI…VINA), 165–195 (SDNL…DISE), 196–217 (STGV…AINS), 218–238 (GQNI…SIGS), 247–268 (VKNV…RIKT), 276–298 (VSDV…VIEQ), and 310–355 (TSGV…DITS). Catalysis depends on Asp-210, which acts as the Proton donor. Cys-212 and Cys-228 form a disulfide bridge. Residue His-232 is part of the active site. Asn-249 carries N-linked (GlcNAc...) asparagine glycosylation. 2 disulfides stabilise this stretch: Cys-338–Cys-343 and Cys-362–Cys-371.

Belongs to the glycosyl hydrolase 28 family.

The protein localises to the secreted. It catalyses the reaction (1,4-alpha-D-galacturonosyl)n+m + H2O = (1,4-alpha-D-galacturonosyl)n + (1,4-alpha-D-galacturonosyl)m.. The protein is Polygalacturonase of Penicillium janthinellum (Penicillium vitale).